The sequence spans 550 residues: CTP synthase (550 aa).

Residues 1–270 are amidoligase domain; that stretch reads MTKFVFVTGG…DRLICEELRL (270 aa). S13 provides a ligand contact to CTP. S13 contacts UTP. Residues 14 to 19 and D71 contribute to the ATP site; that span reads SLGKGI. Residues D71 and E144 each coordinate Mg(2+). Residues 151–153, 191–196, and K227 each bind CTP; these read DIE and KTKPTQ. Residues 191–196 and K227 contribute to the UTP site; that span reads KTKPTQ. Positions 295–547 constitute a Glutamine amidotransferase type-1 domain; the sequence is TIGMVGKYVD…VEAALAGQQR (253 aa). G356 is a binding site for L-glutamine. Catalysis depends on C383, which acts as the Nucleophile; for glutamine hydrolysis. L-glutamine is bound by residues 384–387, E407, and R473; that span reads LGMQ. Catalysis depends on residues H520 and E522.

Belongs to the CTP synthase family. As to quaternary structure, homotetramer.

The enzyme catalyses UTP + L-glutamine + ATP + H2O = CTP + L-glutamate + ADP + phosphate + 2 H(+). The catalysed reaction is L-glutamine + H2O = L-glutamate + NH4(+). It catalyses the reaction UTP + NH4(+) + ATP = CTP + ADP + phosphate + 2 H(+). The protein operates within pyrimidine metabolism; CTP biosynthesis via de novo pathway; CTP from UDP: step 2/2. With respect to regulation, allosterically activated by GTP, when glutamine is the substrate; GTP has no effect on the reaction when ammonia is the substrate. The allosteric effector GTP functions by stabilizing the protein conformation that binds the tetrahedral intermediate(s) formed during glutamine hydrolysis. Inhibited by the product CTP, via allosteric rather than competitive inhibition. In terms of biological role, catalyzes the ATP-dependent amination of UTP to CTP with either L-glutamine or ammonia as the source of nitrogen. Regulates intracellular CTP levels through interactions with the four ribonucleotide triphosphates. This Cupriavidus pinatubonensis (strain JMP 134 / LMG 1197) (Cupriavidus necator (strain JMP 134)) protein is CTP synthase.